A 523-amino-acid polypeptide reads, in one-letter code: NAD(P) transhydrogenase subunit alpha (523 aa).

At 1–411 (MKIGAPREIF…AEIATFRKQT (411 aa)) the chain is on the cytoplasmic side. NAD(+) is bound by residues 127 to 130 (QKMD), Val177, 197 to 199 (DVR), and Gly229. Transmembrane regions (helical) follow at residues 412 to 432 (VSQV…GMYA) and 433 to 455 (PPSF…QVIW). At 456 to 464 (NVSHSLHTP) the chain is on the cytoplasmic side. The chain crosses the membrane as a helical span at residues 465-485 (LMAVTNAISGIVILGALLQIG). The Periplasmic segment spans residues 486–489 (SGNV). Residues 490–510 (LVVLLAAISVLIATINIVGGF) traverse the membrane as a helical segment. Residues 511 to 523 (LVTRRMLAMFQKS) lie on the Cytoplasmic side of the membrane.

It belongs to the AlaDH/PNT family. Heterodimer of an alpha (PntA) and a beta (PntB) chain.

The protein localises to the cell inner membrane. It catalyses the reaction NAD(+) + NADPH + H(+)(in) = NADH + NADP(+) + H(+)(out). In terms of biological role, the transhydrogenation between NADH and NADP is coupled to respiration and ATP hydrolysis and functions as a proton pump across the membrane. The chain is NAD(P) transhydrogenase subunit alpha from Cereibacter sphaeroides (Rhodobacter sphaeroides).